A 685-amino-acid chain; its full sequence is MNDSRQQSLFFITLPDLNKLCAVRIILSNKVADTEIRTIQMKMCRQLLFLHQDILTSPVSGILNQIWVVMAIPFYKARKLNAYVEKYGAKMEAPQRVIPVILQNCLSYSFMARLAPAWNRTGHLLIQGRDFLSQMGKQSAVVLNINVTETQVCLSIEACTIRLPAPELKEFEISQSIIKDFHANKHAVIERHSILSNWCYVLPSMKMGQIINIFHAIPAACPFHSYGDFQRHWDALYGYKLPGDCGKIKIYCNIYFKMLGERTFTYPLSCIRSQPMQFFPRVDSEVVLKSFLSDLKSKLPHICGFPIKMTSKPCYYTQELTKPNIQEHKVKPPNLTTKKMLRASLTQATSRKPACAQSLLPCSVAVDHKVELSVSQPTSGIFSALHLQPESVQGRKKSLSIRAPQVHSEVLMPNRGNTQVQHTNLSSQSNITPKFVPVFKNRLLQMNKNTSVLGSPKRKQHDVTQSKLFSLKTSMIQHDKLNLGPAIKNRYSSNIQMQAANNLNQENSRPLQEKNTESSENMTKFPSSRGKSTVSLNKNKQLSNSAVFVVSNNNLGVVKSAVDFQMKGKENLTGKGITQILGKSHGSLKLKRQPHIFESDGETEDPRLLQQQSENQAKEVGTSDHRLIVSKIAHRSKRKLCPESSKTSKKHHSDTVHYGQSSSSKKQILDSDKSKLKKSLIIHNA.

2 disordered regions span residues 502–538 (NLNQENSRPLQEKNTESSENMTKFPSSRGKSTVSLNK) and 635–685 (RSKR…IHNA). A compositionally biased stretch (polar residues) spans 518 to 538 (SSENMTKFPSSRGKSTVSLNK). The span at 675–685 (KLKKSLIIHNA) shows a compositional bias: basic residues.

This is an uncharacterized protein from Homo sapiens (Human).